A 148-amino-acid polypeptide reads, in one-letter code: MKVILTENIDSLGLIGSEVAVADGYARNYLLPKKKAVLATEANRKVVELKRVKWEAKIAKEKALAEEMAKRIEGVKVTLKAKVSEEDRLYGSIKVKDIQDALAEKGVEVEKSMILLAESIKTLGTFEVPVRVFAGVKPEIIVEVVPED.

The protein belongs to the bacterial ribosomal protein bL9 family.

Binds to the 23S rRNA. This Desulfatibacillum aliphaticivorans protein is Large ribosomal subunit protein bL9.